We begin with the raw amino-acid sequence, 85 residues long: Large ribosomal subunit protein bL27 (85 aa).

Residues 1 to 22 form a disordered region; that stretch reads MAHKKAGGSTKNGRDSESKRLG.

It belongs to the bacterial ribosomal protein bL27 family.

This Idiomarina loihiensis (strain ATCC BAA-735 / DSM 15497 / L2-TR) protein is Large ribosomal subunit protein bL27.